We begin with the raw amino-acid sequence, 178 residues long: ATP synthase subunit delta (178 aa).

The protein belongs to the ATPase delta chain family. In terms of assembly, F-type ATPases have 2 components, F(1) - the catalytic core - and F(0) - the membrane proton channel. F(1) has five subunits: alpha(3), beta(3), gamma(1), delta(1), epsilon(1). F(0) has three main subunits: a(1), b(2) and c(10-14). The alpha and beta chains form an alternating ring which encloses part of the gamma chain. F(1) is attached to F(0) by a central stalk formed by the gamma and epsilon chains, while a peripheral stalk is formed by the delta and b chains.

The protein localises to the cell membrane. In terms of biological role, f(1)F(0) ATP synthase produces ATP from ADP in the presence of a proton or sodium gradient. F-type ATPases consist of two structural domains, F(1) containing the extramembraneous catalytic core and F(0) containing the membrane proton channel, linked together by a central stalk and a peripheral stalk. During catalysis, ATP synthesis in the catalytic domain of F(1) is coupled via a rotary mechanism of the central stalk subunits to proton translocation. Its function is as follows. This protein is part of the stalk that links CF(0) to CF(1). It either transmits conformational changes from CF(0) to CF(1) or is implicated in proton conduction. The protein is ATP synthase subunit delta of Buchnera aphidicola subsp. Baizongia pistaciae (strain Bp).